The chain runs to 275 residues: N-acetyltransferase YodP (275 aa).

Residues 125–271 enclose the N-acetyltransferase domain; sequence FTMRKAETND…AEGLENMNIW (147 aa).

It belongs to the acetyltransferase family.

The catalysed reaction is (3S)-3,6-diaminohexanoate + acetyl-CoA = (3S)-6-acetamido-3-aminohexanoate + CoA + H(+). In terms of biological role, in vitro, is able to catalyze the acetylation of beta-lysine to N6-acetyl-beta-lysine, an archaeal osmolyte produced by methanogenic archaea. Its physiological function has not yet been elucidated. This chain is N-acetyltransferase YodP (yodP), found in Bacillus subtilis (strain 168).